Reading from the N-terminus, the 386-residue chain is Outer membrane protein assembly factor BamB (386 aa).

The first 20 residues, 1 to 20 (MKKLFNQVLVAAGVLALLAG), serve as a signal peptide directing secretion. Cysteine 21 carries N-palmitoyl cysteine lipidation. Residue cysteine 21 is the site of S-diacylglycerol cysteine attachment.

The protein belongs to the BamB family. In terms of assembly, part of the Bam complex.

Its subcellular location is the cell outer membrane. In terms of biological role, part of the outer membrane protein assembly complex, which is involved in assembly and insertion of beta-barrel proteins into the outer membrane. The sequence is that of Outer membrane protein assembly factor BamB from Vibrio cholerae serotype O1 (strain ATCC 39315 / El Tor Inaba N16961).